Consider the following 458-residue polypeptide: Ectonucleotide pyrophosphatase/phosphodiesterase family member 7 (458 aa).

An N-terminal signal peptide occupies residues methionine 1–glycine 21. Over alanine 22–serine 433 the chain is Extracellular. The Zn(2+) site is built by aspartate 39 and threonine 75. Residues valine 72–cysteine 78 form a required for enzyme activity region. Threonine 75 functions as the Nucleophile in the catalytic mechanism. Position 96 (asparagine 96) interacts with substrate. 4 N-linked (GlcNAc...) asparagine glycosylation sites follow: asparagine 100, asparagine 121, asparagine 146, and asparagine 168. Positions 199, 203, 246, and 247 each coordinate Zn(2+). A glycan (N-linked (GlcNAc...) asparagine) is linked at asparagine 267. Histidine 353 is a binding site for Zn(2+). Residues alanine 434 to leucine 454 form a helical membrane-spanning segment. Residues serine 455–alanine 458 are Cytoplasmic-facing.

Belongs to the nucleotide pyrophosphatase/phosphodiesterase family. Requires Zn(2+) as cofactor. Post-translationally, N-glycosylated; required for activity and transport to the plasma membrane. As to expression, detected in the colon (at protein level). Expressed in the duodenum, jejunum and liver and at low levels in the ileum. Expression was very low in the esophagus, stomach and colon.

It is found in the cell membrane. The enzyme catalyses a sphingomyelin + H2O = phosphocholine + an N-acylsphing-4-enine + H(+). The catalysed reaction is 1-hexadecanoyl-sn-glycero-3-phosphocholine + H2O = 1-hexadecanoyl-sn-glycerol + phosphocholine + H(+). It carries out the reaction a 1-O-alkyl-2-acetyl-sn-glycero-3-phosphocholine + H2O = a 1-O-alkyl-2-acetyl-sn-glycerol + phosphocholine + H(+). It catalyses the reaction 1-O-octadecyl-2-acetyl-sn-glycero-3-phosphocholine + H2O = 1-O-octadecyl-2-acetyl-sn-glycerol + phosphocholine + H(+). Inhibited in a dose dependent manner by ATP, imidazole, orthovanadate and zinc ion. Not inhibited by ADP, AMP and EDTA. Choline-specific phosphodiesterase that hydrolyzes sphingomyelin releasing the ceramide and phosphocholine and therefore is involved in sphingomyelin digestion, ceramide formation, and fatty acid (FA) absorption in the gastrointestinal tract. Also has phospholipase C activity and can also cleave phosphocholine from palmitoyl lyso-phosphatidylcholine and platelet-activating factor (PAF) leading to its inactivation. Does not have nucleotide pyrophosphatase activity. May promote cholesterol absorption by affecting the levels of sphingomyelin derived from either diet or endogenous sources, in the intestinal lumen. In Homo sapiens (Human), this protein is Ectonucleotide pyrophosphatase/phosphodiesterase family member 7.